Here is a 466-residue protein sequence, read N- to C-terminus: Asparagine--tRNA ligase (466 aa).

This sequence belongs to the class-II aminoacyl-tRNA synthetase family. As to quaternary structure, homodimer.

It is found in the cytoplasm. The enzyme catalyses tRNA(Asn) + L-asparagine + ATP = L-asparaginyl-tRNA(Asn) + AMP + diphosphate + H(+). In Salmonella paratyphi A (strain ATCC 9150 / SARB42), this protein is Asparagine--tRNA ligase.